Reading from the N-terminus, the 635-residue chain is Threonine--tRNA ligase (635 aa).

A TGS domain is found at 1-61 (MIKITLKDGK…HKDSSLEILT (61 aa)). The catalytic stretch occupies residues 242–532 (DHRKLGKELD…LIEQYAGAFP (291 aa)). Zn(2+)-binding residues include C333, H384, and H509.

Belongs to the class-II aminoacyl-tRNA synthetase family. As to quaternary structure, homodimer. It depends on Zn(2+) as a cofactor.

It is found in the cytoplasm. The enzyme catalyses tRNA(Thr) + L-threonine + ATP = L-threonyl-tRNA(Thr) + AMP + diphosphate + H(+). Catalyzes the attachment of threonine to tRNA(Thr) in a two-step reaction: L-threonine is first activated by ATP to form Thr-AMP and then transferred to the acceptor end of tRNA(Thr). Also edits incorrectly charged L-seryl-tRNA(Thr). The polypeptide is Threonine--tRNA ligase (Clostridium botulinum (strain Loch Maree / Type A3)).